The primary structure comprises 177 residues: Phycocyanin PC645 beta subunit (177 aa).

A mesobiliverdin-binding site is contributed by Tyr18. The (2R,3E)-phycocyanobilin site is built by Lys28, Asn35, and Asp39. 3 residues coordinate 15,16-dihydrobiliverdin: Cys50, Asp54, and Cys61. Residues Asn72, Arg77, Cys82, Arg84, and Asp85 each contribute to the (2R,3E)-phycocyanobilin site. Gln148 lines the 15,16-dihydrobiliverdin pocket. Residues Pro154, Gly156, and Cys158 each contribute to the (2R,3E)-phycocyanobilin site.

This sequence belongs to the phycobiliprotein family. In terms of assembly, heterotetramer of 2 different alpha chains and 2 identical beta chains which form 2 alpha-beta heterodimers within the heterotetramer. Post-translationally, contains two phycocyanobilin chromophores, one mesobiliverdin chromophore and one 15,16-dihydrobiliverdin chromophore with binding mediated by both the alpha and beta subunits.

Its subcellular location is the plastid. It localises to the chloroplast thylakoid membrane. Light-harvesting photosynthetic tetrapyrrole chromophore-protein from the phycobiliprotein complex. The sequence is that of Phycocyanin PC645 beta subunit from Chroomonas sp. (strain CCMP270).